A 166-amino-acid polypeptide reads, in one-letter code: Regulatory protein RecX (166 aa).

The protein belongs to the RecX family.

It is found in the cytoplasm. Its function is as follows. Modulates RecA activity. This chain is Regulatory protein RecX, found in Escherichia coli O7:K1 (strain IAI39 / ExPEC).